Reading from the N-terminus, the 424-residue chain is Histidine--tRNA ligase (424 aa).

Belongs to the class-II aminoacyl-tRNA synthetase family. Homodimer.

It localises to the cytoplasm. The catalysed reaction is tRNA(His) + L-histidine + ATP = L-histidyl-tRNA(His) + AMP + diphosphate + H(+). The polypeptide is Histidine--tRNA ligase (Shewanella sediminis (strain HAW-EB3)).